Here is a 1300-residue protein sequence, read N- to C-terminus: Insulin receptor-related protein (1300 aa).

Positions 1-26 are cleaved as a signal peptide; it reads MARPKLWPWGILLLVSLLSAGFNLDT. Asparagine 47 carries N-linked (GlcNAc...) asparagine glycosylation. 9 disulfides stabilise this stretch: cysteine 214–cysteine 222, cysteine 216–cysteine 228, cysteine 229–cysteine 237, cysteine 233–cysteine 246, cysteine 249–cysteine 258, cysteine 262–cysteine 274, cysteine 280–cysteine 300, cysteine 304–cysteine 317, and cysteine 320–cysteine 324. Asparagine 311 is a glycosylation site (N-linked (GlcNAc...) asparagine). N-linked (GlcNAc...) asparagine glycosylation is found at asparagine 411, asparagine 492, asparagine 528, asparagine 616, asparagine 634, asparagine 756, asparagine 885, and asparagine 898. Fibronectin type-III domains follow at residues 483–603 and 607–707; these read QTRT…TLPA and VPQD…AQEA. Cysteine 657 and cysteine 864 are disulfide-bonded. A disordered region spans residues 740–762; that stretch reads DAGRHRRAIGSPRPGGNSSDFEI. Over 747-921 the chain is Extracellular; it reads AIGSPRPGGN…PEEEDSGGLH (175 aa). In terms of domain architecture, Fibronectin type-III 3 spans 818 to 912; that stretch reads IPGKLSWEAA…DSVAFYIPGP (95 aa). Residues 922–943 form a helical membrane-spanning segment; it reads ILLTVTPAGLMLLIILAALGFF. Residues 944 to 1300 lie on the Cytoplasmic side of the membrane; that stretch reads YSRKRNGTLY…CSLQNGGPEH (357 aa). Residues 979 to 1254 form the Protein kinase domain; it reads ISIIRELGQG…SIQKELRPSF (276 aa). ATP contacts are provided by residues 985-993 and lysine 1013; that span reads LGQGSFGMV. Aspartate 1115 (proton acceptor) is an active-site residue. A phosphotyrosine; by autocatalysis mark is found at tyrosine 1145 and tyrosine 1146. Residues 1270-1300 form a disordered region; the sequence is GLQPTTDAESSSPPTSKGASDCSLQNGGPEH. Positions 1272–1300 are enriched in polar residues; the sequence is QPTTDAESSSPPTSKGASDCSLQNGGPEH.

Belongs to the protein kinase superfamily. Tyr protein kinase family. Insulin receptor subfamily. Probable tetramer of 2 alpha and 2 beta chains linked by disulfide bonds. The alpha chains contribute to the formation of the ligand-binding domain, while the beta chains carry the kinase domain. Post-translationally, autophosphorylated on tyrosine residues between pH 7.9 and pH 10.5.

It is found in the membrane. The catalysed reaction is L-tyrosyl-[protein] + ATP = O-phospho-L-tyrosyl-[protein] + ADP + H(+). Its function is as follows. Receptor with tyrosine-protein kinase activity. Functions as a pH sensing receptor which is activated by increased extracellular pH. Activates an intracellular signaling pathway that involves IRS1 and AKT1/PKB. The polypeptide is Insulin receptor-related protein (INSRR) (Cavia porcellus (Guinea pig)).